The following is a 2328-amino-acid chain: Reducing polyketide synthase Preu2 (2328 aa).

In terms of domain architecture, Ketosynthase family 3 (KS3) spans 1 to 259 (MMAVHLAVAS…GSNVHVIVES (259 aa)). Positions 376 to 696 (IFTGQGAQWP…SGLLKRSSNS (321 aa)) are malonyl-CoA:ACP transacylase (MAT) domain. The interval 766 to 899 (NELLGEELSM…GSLTVQFGDD (134 aa)) is N-terminal hotdog fold. The tract at residues 766 to 1057 (NELLGEELSM…FCTAPFRMST (292 aa)) is dehydratase (DH) domain. The PKS/mFAS DH domain occupies 766–1059 (NELLGEELSM…TAPFRMSTPE (294 aa)). Histidine 798 (proton acceptor; for dehydratase activity) is an active-site residue. Residues 914 to 1059 (LTELDLDTFY…TAPFRMSTPE (146 aa)) form a C-terminal hotdog fold region. Catalysis depends on aspartate 969, which acts as the Proton donor; for dehydratase activity. The segment at 1198-1419 (DGMLTQLYSE…VDERVVSLRD (222 aa)) is methyltransferase (MT) domain. Residues 1932-2111 (CYIIIGTSDL…AASVVHLGHV (180 aa)) are ketoreductase (KR)domain. The Carrier domain maps to 2231–2309 (SSSHDIIRNG…NIVDFAVAHL (79 aa)). Serine 2269 carries the post-translational modification O-(pantetheine 4'-phosphoryl)serine.

Pantetheine 4'-phosphate is required as a cofactor.

In terms of biological role, reducing polyketide synthase; part of a gene cluster that mediates the biosynthesis of a yet unidentified natural product. The chain is Reducing polyketide synthase Preu2 from Preussia isomera (Coprophilous fungus).